Reading from the N-terminus, the 308-residue chain is Polyprenyl-phosphate transporter (308 aa).

The next 8 helical transmembrane spans lie at 15–35 (GLAM…IAFI), 69–89 (INGL…ATLA), 91–111 (LISW…FGLI), 130–150 (LLWL…KPLH), 163–183 (AIAI…LLLI), 200–220 (ILLI…HILS), 228–248 (DVTL…IWPW), and 282–302 (PSQW…VLGL).

Belongs to the PopT family.

It is found in the cell inner membrane. Active in alkaline conditions. Flippase that catalyzes the transport of undecaprenyl phosphate (UndP) across the cytoplasmic membrane, from the external side to the cytoplasmic side. Is involved in UndP recycling during peptidoglycan synthesis. Required for cell shape maintenance at alkaline pH and peptidoglycan maintenance. Required by the cholera pathogen for growth and cell shape maintenance in the intestine. This is Polyprenyl-phosphate transporter from Vibrio cholerae serotype O1 (strain ATCC 39315 / El Tor Inaba N16961).